The chain runs to 135 residues: MARTKQTARKSTGGKAPRKQLATKAARKSTPSTCGVKPHRYRPGTVALREIRRYQKSTELLIRKLPFQRLVREIAQDFNTDLRFQSAAVGALQEASEAYLVGLLEDTNLCAIHAKRVTIMPKDIQLARRIRGERA.

Residues 1-41 (MARTKQTARKSTGGKAPRKQLATKAARKSTPSTCGVKPHRY) form a disordered region. Arg-3 bears the Asymmetric dimethylarginine; by PRMT6; alternate mark. The residue at position 3 (Arg-3) is a Citrulline; alternate. Thr-4 carries the post-translational modification Phosphothreonine; by HASPIN. Lys-5 carries the post-translational modification Allysine; alternate. At Lys-5 the chain carries N6,N6,N6-trimethyllysine; alternate. Lys-5 is subject to N6,N6-dimethyllysine; alternate. Residue Lys-5 is modified to N6-(2-hydroxyisobutyryl)lysine; alternate. An N6-(beta-hydroxybutyryl)lysine; alternate modification is found at Lys-5. At Lys-5 the chain carries N6-acetyllysine; alternate. Lys-5 bears the N6-methyllysine; alternate mark. 5-glutamyl dopamine; alternate is present on Gln-6. At Gln-6 the chain carries 5-glutamyl serotonin; alternate. Residue Thr-7 is modified to Phosphothreonine; by PKC. Arg-9 carries the citrulline; alternate modification. Arg-9 carries the post-translational modification Symmetric dimethylarginine; by PRMT5; alternate. Lys-10 is subject to N6,N6,N6-trimethyllysine; alternate. Lys-10 bears the N6,N6-dimethyllysine; alternate mark. At Lys-10 the chain carries N6-(2-hydroxyisobutyryl)lysine; alternate. N6-(beta-hydroxybutyryl)lysine; alternate is present on Lys-10. Lys-10 carries the N6-acetyllysine; alternate modification. At Lys-10 the chain carries N6-methyllysine; alternate. Lys-10 carries the post-translational modification N6-lactoyllysine; alternate. Residue Ser-11 is modified to ADP-ribosylserine; alternate. Ser-11 carries the post-translational modification Phosphoserine; alternate; by AURKB, AURKC, RPS6KA3, RPS6KA4 and RPS6KA5. The residue at position 12 (Thr-12) is a Phosphothreonine; by PKC. The residue at position 15 (Lys-15) is an N6-(2-hydroxyisobutyryl)lysine; alternate. The residue at position 15 (Lys-15) is an N6-(beta-hydroxybutyryl)lysine; alternate. N6-acetyllysine; alternate is present on Lys-15. N6-lactoyllysine; alternate is present on Lys-15. The residue at position 15 (Lys-15) is an N6-glutaryllysine; alternate. At Lys-15 the chain carries N6-succinyllysine; alternate. Citrulline; alternate is present on Arg-18. Residue Arg-18 is modified to Asymmetric dimethylarginine; by CARM1; alternate. N6-(2-hydroxyisobutyryl)lysine; alternate is present on residues Lys-19 and Lys-24. An N6-(beta-hydroxybutyryl)lysine; alternate mark is found at Lys-19 and Lys-24. An N6-acetyllysine; alternate mark is found at Lys-19 and Lys-24. N6-methyllysine; alternate occurs at positions 19 and 24. 2 positions are modified to N6-lactoyllysine; alternate: Lys-19 and Lys-24. Residues Lys-19 and Lys-24 each carry the N6-glutaryllysine; alternate modification. 2 positions are modified to N6-butyryllysine; alternate: Lys-19 and Lys-24. Arg-27 is modified (citrulline). Lys-28 is modified (N6,N6,N6-trimethyllysine; alternate). Lys-28 is subject to N6,N6-dimethyllysine; alternate. An N6-(2-hydroxyisobutyryl)lysine; alternate modification is found at Lys-28. Lys-28 carries the N6-acetyllysine; alternate modification. The residue at position 28 (Lys-28) is an N6-methyllysine; alternate. At Lys-28 the chain carries N6-lactoyllysine; alternate. The residue at position 28 (Lys-28) is an N6-glutaryllysine; alternate. The residue at position 29 (Ser-29) is an ADP-ribosylserine; alternate. Position 29 is a phosphoserine; alternate; by AURKB, AURKC and RPS6KA5 (Ser-29). At Ser-32 the chain carries Phosphoserine. Lys-37 carries the N6-methyllysine modification. Phosphotyrosine is present on Tyr-41. Position 56 is an N6,N6,N6-trimethyllysine; alternate (Lys-56). Residue Lys-56 is modified to N6-(2-hydroxyisobutyryl)lysine; alternate. Lys-56 is modified (N6-(beta-hydroxybutyryl)lysine; alternate). N6-acetyllysine; alternate is present on Lys-56. Lys-56 is subject to N6-lactoyllysine; alternate. Lys-56 is subject to N6-glutaryllysine; alternate. Lys-56 is subject to N6-succinyllysine; alternate. Lys-56 carries the post-translational modification N6-methyllysine; by EHMT2; alternate. Ser-57 bears the Phosphoserine mark. At Lys-64 the chain carries N6-(2-hydroxyisobutyryl)lysine; alternate. Lys-64 bears the N6-methyllysine; alternate mark. Thr-80 carries the phosphothreonine modification. Ser-86 is subject to Phosphoserine. Position 107 is a phosphothreonine (Thr-107). 2 positions are modified to N6-glutaryllysine; alternate: Lys-115 and Lys-122. Lys-115 carries the post-translational modification N6-acetyllysine. An N6-(2-hydroxyisobutyryl)lysine; alternate modification is found at Lys-122. Residue Lys-122 is modified to N6-acetyllysine; alternate. Position 122 is an N6-methyllysine; alternate (Lys-122). Lys-122 is modified (N6-succinyllysine; alternate).

This sequence belongs to the histone H3 family. The nucleosome is a histone octamer containing two molecules each of H2A, H2B, H3 and H4 assembled in one H3-H4 heterotetramer and two H2A-H2B heterodimers. The octamer wraps approximately 147 bp of DNA. Acetylation is generally linked to gene activation. Acetylation on Lys-10 (H3K9ac) impairs methylation at Arg-9 (H3R8me2s). Acetylation on Lys-19 (H3K18ac) and Lys-24 (H3K24ac) favors methylation at Arg-18 (H3R17me). Acetylation at Lys-122 (H3K122ac) by EP300/p300 plays a central role in chromatin structure: localizes at the surface of the histone octamer and stimulates transcription, possibly by promoting nucleosome instability. In terms of processing, citrullination at Arg-9 (H3R8ci) and/or Arg-18 (H3R17ci) by PADI4 impairs methylation and represses transcription. Post-translationally, asymmetric dimethylation at Arg-18 (H3R17me2a) by CARM1 is linked to gene activation. Symmetric dimethylation at Arg-9 (H3R8me2s) by PRMT5 is linked to gene repression. Asymmetric dimethylation at Arg-3 (H3R2me2a) by PRMT6 is linked to gene repression and is mutually exclusive with H3 Lys-5 methylation (H3K4me2 and H3K4me3). H3R2me2a is present at the 3' of genes regardless of their transcription state and is enriched on inactive promoters, while it is absent on active promoters. Methylation at Lys-5 (H3K4me) is linked to gene activation. Methylation at Lys-5 (H3K4me) facilitates subsequent acetylation of H3 and H4. Methylation at Lys-10 (H3K9me) and Lys-28 (H3K27me) are linked to gene repression. Methylation at Lys-10 (H3K9me) is a specific target for HP1 proteins (CBX1, CBX3 and CBX5) and prevents subsequent phosphorylation at Ser-11 (H3S10ph) and acetylation of H3 and H4. Methylation at Lys-5 (H3K4me) requires preliminary monoubiquitination of H2B at 'Lys-120'. Methylation at Lys-10 (H3K9me) and Lys-28 (H3K27me) are enriched in inactive X chromosome chromatin. Monomethylation at Lys-56 (H3K56me1) by EHMT2/G9A in G1 phase promotes interaction with PCNA and is required for DNA replication. In terms of processing, phosphorylated at Thr-4 (H3T3ph) by HASPIN during prophase and dephosphorylated during anaphase. Phosphorylation at Ser-11 (H3S10ph) by AURKB is crucial for chromosome condensation and cell-cycle progression during mitosis and meiosis. In addition phosphorylation at Ser-11 (H3S10ph) by RPS6KA4 and RPS6KA5 is important during interphase because it enables the transcription of genes following external stimulation, like mitogens, stress, growth factors or UV irradiation and result in the activation of genes, such as c-fos and c-jun. Phosphorylation at Ser-11 (H3S10ph), which is linked to gene activation, prevents methylation at Lys-10 (H3K9me) but facilitates acetylation of H3 and H4. Phosphorylation at Ser-11 (H3S10ph) by AURKB mediates the dissociation of HP1 proteins (CBX1, CBX3 and CBX5) from heterochromatin. Phosphorylation at Ser-11 (H3S10ph) is also an essential regulatory mechanism for neoplastic cell transformation. Phosphorylated at Ser-29 (H3S28ph) by MAP3K20 isoform 1, RPS6KA5 or AURKB during mitosis or upon ultraviolet B irradiation. Phosphorylation at Thr-7 (H3T6ph) by PRKCB is a specific tag for epigenetic transcriptional activation that prevents demethylation of Lys-5 (H3K4me) by LSD1/KDM1A. At centromeres, specifically phosphorylated at Thr-12 (H3T11ph) from prophase to early anaphase, by DAPK3 and PKN1. Phosphorylation at Thr-12 (H3T11ph) by PKN1 or isoform M2 of PKM (PKM2) is a specific tag for epigenetic transcriptional activation that promotes demethylation of Lys-10 (H3K9me) by KDM4C/JMJD2C. Phosphorylation at Tyr-41 (H3Y41ph) by JAK2 promotes exclusion of CBX5 (HP1 alpha) from chromatin. Post-translationally, lysine deamination at Lys-5 (H3K4all) to form allysine is mediated by LOXL2. Allysine formation by LOXL2 only takes place on H3K4me3 and results in gene repression. Butyrylation of histones marks active promoters and competes with histone acetylation. It is present during late spermatogenesis. In terms of processing, succinylated. Desuccinylation at Lys-122 (H3K122succ) by SIRT7 in response to DNA damage promotes chromatin condensation and double-strand breaks (DSBs) repair. Post-translationally, serine ADP-ribosylation constitutes the primary form of ADP-ribosylation of proteins in response to DNA damage. Serine ADP-ribosylation at Ser-11 (H3S10ADPr) is mutually exclusive with phosphorylation at Ser-11 (H3S10ph) and impairs acetylation at Lys-10 (H3K9ac). Specifically expressed in the seminiferous tubules of testis.

It localises to the nucleus. It is found in the chromosome. In terms of biological role, core component of nucleosome. Nucleosomes wrap and compact DNA into chromatin, limiting DNA accessibility to the cellular machineries which require DNA as a template. Histones thereby play a central role in transcription regulation, DNA repair, DNA replication and chromosomal stability. DNA accessibility is regulated via a complex set of post-translational modifications of histones, also called histone code, and nucleosome remodeling. Hominid-specific H3.5/H3F3C preferentially colocalizes with euchromatin, and it is associated with actively transcribed genes. The chain is Histone H3.3C from Homo sapiens (Human).